The following is a 536-amino-acid chain: MAAPSPVRVKLLFDYPPPAIPESCMFWLLLDAKRCRVVTDLASIIRHKYMDGQGGGISLYVEDCLLPPGESILVIRDNDSIRVKWDGAAIERNQEAETCNDGAQNKSKKRHWKKSEDECDSGHKRKKQKSSSTQVDLKSGKDGGIRDKRKPSPPMECNASDPEELRESGRKTHKGKRTKKKSEAPIENPPDKHSRKCPPQASNKALKLSWKRQTSSSDSSDTSSCSDQPTPTTQQKPQSSAKRQNQAATRESVTHSVSPKAVNGISSTKNKKADAPISSSDMDTAVGGNETLICPVPPEDLSTHIQQHSQSPTSDSAESIELVIKKSNASLSSLTDNRVAGVSDKLSPNVSGRGRGRGEDFSWRGQRGRWFRGQGNNSNRGRGRGDSSNVFYKYNTEKEKQQQLEESATNVSIIIQNPQETMKRDYSSLPLLAAAPQVGKLIAFKLLEVSENYTPEVSEYKEGKILSFDPVTKQIEMEIISQQTMRKPGKFDVVYQSEDGEDIVEYAVPQESKVMLNWNTLIEPRLLMEKESQVQC.

Positions 96 to 316 (AETCNDGAQN…QHSQSPTSDS (221 aa)) are disordered. The span at 171 to 180 (KTHKGKRTKK) shows a compositional bias: basic residues. Positions 181–192 (KSEAPIENPPDK) are enriched in basic and acidic residues. The span at 213–238 (QTSSSDSSDTSSCSDQPTPTTQQKPQ) shows a compositional bias: low complexity. 2 stretches are compositionally biased toward polar residues: residues 239–257 (SSAK…THSV) and 303–316 (THIQ…TSDS). Repeat copies occupy residues 353 to 358 (RGRGRG) and 380 to 385 (RGRGRG). Residues 353–385 (RGRGRGEDFSWRGQRGRWFRGQGNNSNRGRGRG) are 2 X 6 AA repeats of R-G-R-G-R-G. The tract at residues 368–387 (GRWFRGQGNNSNRGRGRGDS) is disordered. Positions 371–380 (FRGQGNNSNR) are enriched in low complexity. The region spanning 425–523 (DYSSLPLLAA…VMLNWNTLIE (99 aa)) is the Tudor; atypical domain.

This sequence belongs to the coilin family. As to expression, expressed in both oocytes and somatic cells.

The protein localises to the nucleus. This is Coilin (coil) from Xenopus laevis (African clawed frog).